Consider the following 108-residue polypeptide: Iron-sulfur cluster assembly protein CyaY (108 aa).

This sequence belongs to the frataxin family.

Involved in iron-sulfur (Fe-S) cluster assembly. May act as a regulator of Fe-S biogenesis. This chain is Iron-sulfur cluster assembly protein CyaY, found in Pseudomonas paraeruginosa (strain DSM 24068 / PA7) (Pseudomonas aeruginosa (strain PA7)).